We begin with the raw amino-acid sequence, 500 residues long: Protein DML1 (500 aa).

Belongs to the misato family.

The protein resides in the mitochondrion. Involved in the partitioning of the mitochondrial organelle and mitochondrial DNA (mtDNA) inheritance. This chain is Protein DML1 (DML1), found in Scheffersomyces stipitis (strain ATCC 58785 / CBS 6054 / NBRC 10063 / NRRL Y-11545) (Yeast).